The sequence spans 207 residues: HTH-type transcriptional regulator BetI 2 (207 aa).

Residues 8 to 68 form the HTH tetR-type domain; that stretch reads PIRRQQLIKA…ATMRQILTDL (61 aa). A DNA-binding region (H-T-H motif) is located at residues 31–50; sequence TVMRIARHAGVSAGIISHYF.

It participates in amine and polyamine biosynthesis; betaine biosynthesis via choline pathway [regulation]. Repressor involved in the biosynthesis of the osmoprotectant glycine betaine. It represses transcription of the choline transporter BetT and the genes of BetAB involved in the synthesis of glycine betaine. The sequence is that of HTH-type transcriptional regulator BetI 2 from Chromohalobacter salexigens (strain ATCC BAA-138 / DSM 3043 / CIP 106854 / NCIMB 13768 / 1H11).